A 92-amino-acid polypeptide reads, in one-letter code: Small ribosomal subunit protein uS19 (92 aa).

This sequence belongs to the universal ribosomal protein uS19 family.

In terms of biological role, protein S19 forms a complex with S13 that binds strongly to the 16S ribosomal RNA. This Geobacillus stearothermophilus (Bacillus stearothermophilus) protein is Small ribosomal subunit protein uS19 (rpsS).